Reading from the N-terminus, the 245-residue chain is Ribonuclease P protein component 3 (245 aa).

This sequence belongs to the eukaryotic/archaeal RNase P protein component 3 family. In terms of assembly, consists of a catalytic RNA component and at least 4-5 protein subunits.

It is found in the cytoplasm. The catalysed reaction is Endonucleolytic cleavage of RNA, removing 5'-extranucleotides from tRNA precursor.. In terms of biological role, part of ribonuclease P, a protein complex that generates mature tRNA molecules by cleaving their 5'-ends. The chain is Ribonuclease P protein component 3 from Methanothermobacter thermautotrophicus (strain ATCC 29096 / DSM 1053 / JCM 10044 / NBRC 100330 / Delta H) (Methanobacterium thermoautotrophicum).